Reading from the N-terminus, the 377-residue chain is Nucleosome assembly protein 1;3 (377 aa).

Residues 26–80 (VNVLKNKLQGLTGKHSNVLENLSPNVRKRVEVLREIQTQHDELEAKFFEERAALE) adopt a coiled-coil conformation. A Nuclear export signal motif is present at residues 47–62 (LSPNVRKRVEVLREIQ). Residues 223-228 (KKKPKK) carry the Nuclear localization signal motif. Positions 298–377 (EAAQDEDYID…GERPPECKQQ (80 aa)) are disordered. Positions 300–341 (AQDEDYIDLEDDEDEEDDEDEDEDEEDEEEEDEDEDDDDEDE) are enriched in acidic residues. Residues 345–357 (KTKKKSSAGRKRS) show a composition bias toward basic residues. Cysteine 374 carries the cysteine methyl ester modification. Cysteine 374 carries the S-farnesyl cysteine lipid modification. Positions 375–377 (KQQ) are cleaved as a propeptide — removed in mature form.

This sequence belongs to the nucleosome assembly protein (NAP) family. In terms of assembly, can form homomeric and heteromeric protein complexes with NAP1;4. Binds histones H2A and H2B in vivo. Also able to bind histones H1 and H4 in vitro. Interacts with CYCB1;1 and with alpha tubulin.

It is found in the nucleus. It localises to the cytoplasm. Functionally, may modulate chromatin structure by regulation of nucleosome assembly/disassembly. Could function together with B-type cyclins in the regulation of microtubule dynamics. This is Nucleosome assembly protein 1;3 (NAP1;3) from Nicotiana tabacum (Common tobacco).